Reading from the N-terminus, the 124-residue chain is Glutaredoxin-2 (124 aa).

C13 and C16 are disulfide-bonded.

The protein belongs to the glutaredoxin family. In terms of assembly, homodimer.

It is found in the host cytoplasm. Glutaredoxin necessary for virion morphogenesis and virus replication. Functions as a thiol-disulfide transfer protein between membrane-associated OPG128 and substrates OPG095 or OPG053. The complete pathway for formation of disulfide bonds in intracellular virion membrane proteins sequentially involves oxidation of OPG072, OPG128 and OPG088. Exhibit thioltransferase and dehydroascorbate reductase activities in vitro. In Mus musculus (Mouse), this protein is Glutaredoxin-2 (OPG088).